The sequence spans 278 residues: Putative pyruvate, phosphate dikinase regulatory protein (278 aa).

156-163 (GVSRTSKT) is an ADP binding site.

This sequence belongs to the pyruvate, phosphate/water dikinase regulatory protein family. PDRP subfamily.

The enzyme catalyses N(tele)-phospho-L-histidyl/L-threonyl-[pyruvate, phosphate dikinase] + ADP = N(tele)-phospho-L-histidyl/O-phospho-L-threonyl-[pyruvate, phosphate dikinase] + AMP + H(+). It catalyses the reaction N(tele)-phospho-L-histidyl/O-phospho-L-threonyl-[pyruvate, phosphate dikinase] + phosphate + H(+) = N(tele)-phospho-L-histidyl/L-threonyl-[pyruvate, phosphate dikinase] + diphosphate. Functionally, bifunctional serine/threonine kinase and phosphorylase involved in the regulation of the pyruvate, phosphate dikinase (PPDK) by catalyzing its phosphorylation/dephosphorylation. The polypeptide is Putative pyruvate, phosphate dikinase regulatory protein (Lactobacillus acidophilus (strain ATCC 700396 / NCK56 / N2 / NCFM)).